An 84-amino-acid polypeptide reads, in one-letter code: Transcriptional regulator WhiB1 (84 aa).

The region spanning 8 to 70 (VCRDEDPELF…GGMSEDERRA (63 aa)) is the 4Fe-4S Wbl-type domain. [4Fe-4S] cluster-binding residues include cysteine 9, cysteine 37, cysteine 40, and cysteine 46.

It belongs to the WhiB family. In terms of assembly, homodimer. Requires [4Fe-4S] cluster as cofactor. Post-translationally, the Fe-S cluster can be nitrosylated by nitric oxide (NO). Upon Fe-S cluster removal intramolecular disulfide bonds are formed.

It localises to the cytoplasm. Acts as a transcriptional regulator. Probably redox-responsive. The apo- but not holo-form probably binds DNA. This chain is Transcriptional regulator WhiB1 (whiB1), found in Mycobacterium tuberculosis (strain CDC 1551 / Oshkosh).